The primary structure comprises 142 residues: Small ribosomal subunit protein uS12 (142 aa).

The protein belongs to the universal ribosomal protein uS12 family. Part of the 30S ribosomal subunit.

With S4 and S5 plays an important role in translational accuracy. Located at the interface of the 30S and 50S subunits. The chain is Small ribosomal subunit protein uS12 from Methanoregula boonei (strain DSM 21154 / JCM 14090 / 6A8).